A 418-amino-acid polypeptide reads, in one-letter code: Deoxyribonuclease Tat-D (418 aa).

A divalent metal cation is bound by residues Glu185, His226, His277, and Asp327.

Belongs to the metallo-dependent hydrolases superfamily. TatD-type hydrolase family. Requires Mg(2+) as cofactor.

Its subcellular location is the cytoplasm. Its function is as follows. Has both endo- and exonuclease activities. Incises double-stranded DNA without obvious specificity via its endonuclease activity and excises the DNA from the 3'-to 5'-end by its exonuclease activity. May have a role in apoptosis. The polypeptide is Deoxyribonuclease Tat-D (Saccharomyces cerevisiae (strain ATCC 204508 / S288c) (Baker's yeast)).